A 98-amino-acid polypeptide reads, in one-letter code: Co-chaperonin GroES (98 aa).

It belongs to the GroES chaperonin family. As to quaternary structure, heptamer of 7 subunits arranged in a ring. Interacts with the chaperonin GroEL.

The protein localises to the cytoplasm. Its function is as follows. Together with the chaperonin GroEL, plays an essential role in assisting protein folding. The GroEL-GroES system forms a nano-cage that allows encapsulation of the non-native substrate proteins and provides a physical environment optimized to promote and accelerate protein folding. GroES binds to the apical surface of the GroEL ring, thereby capping the opening of the GroEL channel. This Micrococcus luteus (strain ATCC 4698 / DSM 20030 / JCM 1464 / CCM 169 / CCUG 5858 / IAM 1056 / NBRC 3333 / NCIMB 9278 / NCTC 2665 / VKM Ac-2230) (Micrococcus lysodeikticus) protein is Co-chaperonin GroES.